The sequence spans 116 residues: Non-specific lipid-transfer protein (116 aa).

The first 22 residues, 1–22, serve as a signal peptide directing secretion; sequence MSLKLACVVVLCMVVGAPLAQG. 3 disulfides stabilise this stretch: cysteine 36–cysteine 52, cysteine 53–cysteine 98, and cysteine 73–cysteine 112.

The protein belongs to the plant LTP family.

In terms of biological role, plant non-specific lipid-transfer proteins transfer phospholipids as well as galactolipids across membranes. May play a role in wax or cutin deposition in the cell walls of expanding epidermal cells and certain secretory tissues. The sequence is that of Non-specific lipid-transfer protein from Gossypium hirsutum (Upland cotton).